Reading from the N-terminus, the 284-residue chain is MKKIAWSLGILVTIGALCAIVWPSWYPSRPLVTTPSQADIQADQSSPRDLLEYFLSGLGETSLPVIQQQVQRYEQENQGLLIDSSLFAQYVQYKAALSELTLPQASGGLSTQEWWQLHQSLLDLQARYFSAEQQALFAEENRLRELAIEKRRIYEQYGQSEEAQRAWQALLLDQPDFIQRSEATAQLLPQLTQAGQGDTQQRYLARVALVGEQGAQRLAELDDSRATFEQQFQDYYQARAAILVRNELSASEQQTQIQQLREQHFAPEQWRRIDALERLKDNGE.

Residues I4–S24 form a helical membrane-spanning segment.

This sequence belongs to the lipase chaperone family.

The protein resides in the cell inner membrane. May be involved in the folding of the extracellular lipase during its passage through the periplasm. This chain is Lipase chaperone (lifO), found in Vibrio cholerae serotype O1 (strain ATCC 39315 / El Tor Inaba N16961).